A 264-amino-acid polypeptide reads, in one-letter code: Thymidylate synthase (264 aa).

Arg21 serves as a coordination point for dUMP. His51 serves as a coordination point for (6R)-5,10-methylene-5,6,7,8-tetrahydrofolate. 126-127 (RR) provides a ligand contact to dUMP. The active-site Nucleophile is Cys146. DUMP contacts are provided by residues 166 to 169 (RSAD), Asn177, and 207 to 209 (HLY). Residue Asp169 coordinates (6R)-5,10-methylene-5,6,7,8-tetrahydrofolate. Ala263 serves as a coordination point for (6R)-5,10-methylene-5,6,7,8-tetrahydrofolate.

It belongs to the thymidylate synthase family. Bacterial-type ThyA subfamily. In terms of assembly, homodimer.

It is found in the cytoplasm. The enzyme catalyses dUMP + (6R)-5,10-methylene-5,6,7,8-tetrahydrofolate = 7,8-dihydrofolate + dTMP. Its pathway is pyrimidine metabolism; dTTP biosynthesis. Catalyzes the reductive methylation of 2'-deoxyuridine-5'-monophosphate (dUMP) to 2'-deoxythymidine-5'-monophosphate (dTMP) while utilizing 5,10-methylenetetrahydrofolate (mTHF) as the methyl donor and reductant in the reaction, yielding dihydrofolate (DHF) as a by-product. This enzymatic reaction provides an intracellular de novo source of dTMP, an essential precursor for DNA biosynthesis. The protein is Thymidylate synthase of Azoarcus sp. (strain BH72).